The chain runs to 1213 residues: A disintegrin and metalloproteinase with thrombospondin motifs 19 (1213 aa).

An N-terminal signal peptide occupies residues 1–27 (MGKNREMRLTHICCCCLLYQLGFLSNG). A propeptide spanning residues 28–322 (IVSELQFAPD…KIAESGRGKR (295 aa)) is cleaved from the precursor. Disordered stretches follow at residues 49–161 (WRRE…PPPA) and 192–215 (FLAPRFAVEQRPNPGPGPTGAASA). A compositionally biased stretch (gly residues) spans 52-71 (EPVDPAGGSGGSADPGWVRG). Over residues 110-119 (RPPPPSEGEE) the composition is skewed to acidic residues. Residues 120 to 139 (DEELESQELPRGSSGAAALS) show a composition bias toward low complexity. The span at 140–155 (PGAPASWQPPPPPQPP) shows a compositional bias: pro residues. Asn266 is a glycosylation site (N-linked (GlcNAc...) asparagine). Residues 298–305 (HYCGIISD) carry the Cysteine switch motif. Cys300 provides a ligand contact to Zn(2+). One can recognise a Peptidase M12B domain in the interval 331–551 (YNIETVVVAD…KASNCLLQTN (221 aa)). 11 disulfide bridges follow: Cys407–Cys472, Cys447–Cys454, Cys466–Cys546, Cys505–Cys530, Cys575–Cys599, Cys586–Cys607, Cys594–Cys626, Cys620–Cys631, Cys651–Cys686, Cys655–Cys691, and Cys666–Cys676. His488 provides a ligand contact to Zn(2+). The active site involves Glu489. His492 and His498 together coordinate Zn(2+). A Disintegrin domain is found at 552–639 (PQSVNSVMVP…ECTSRTSAPE (88 aa)). The region spanning 640-692 (HLAGEWSLWSPCSRTCSAGISSRERKCPGLDSEARDCNGPRKQYRICENPPCP) is the TSP type-1 1 domain. Residues 797-920 (IIKGDFNHTR…PENQSSKAPE (124 aa)) are spacer. Residues Asn803, Asn913, Asn955, and Asn1015 are each glycosylated (N-linked (GlcNAc...) asparagine). TSP type-1 domains lie at 921 to 981 (PLFM…NEQP), 982 to 1043 (CQTR…QDCM), 1045 to 1089 (VWEA…EDCE), and 1093 to 1150 (KCYV…QPCN). Disulfide bonds link Cys994/Cys1037, Cys998/Cys1042, and Cys1009/Cys1026. In terms of domain architecture, PLAC spans 1166 to 1205 (LTFKCLGDQWPVYCRVIREKNLCQDMRWYQRCCETCRDFY).

Requires Zn(2+) as cofactor. In terms of processing, the precursor is cleaved by a furin endopeptidase. Glycosylated. Can be O-fucosylated by POFUT2 on a serine or a threonine residue found within the consensus sequence C1-X(2)-(S/T)-C2-G of the TSP type-1 repeat domains where C1 and C2 are the first and second cysteine residue of the repeat, respectively. Fucosylated repeats can then be further glycosylated by the addition of a beta-1,3-glucose residue by the glucosyltransferase, B3GALTL. Fucosylation mediates the efficient secretion of ADAMTS family members. Can also be C-glycosylated with one or two mannose molecules on tryptophan residues within the consensus sequence W-X-X-W of the TPRs, and N-glycosylated. These other glycosylations can also facilitate secretion. As to expression, expressed in fetal lung, but not in any adult tissues examined. Expression was detected in an osteosarcoma cDNA library.

Its subcellular location is the secreted. The protein resides in the extracellular space. The protein localises to the extracellular matrix. This is A disintegrin and metalloproteinase with thrombospondin motifs 19 (ADAMTS19) from Homo sapiens (Human).